Reading from the N-terminus, the 519-residue chain is Membrane-bound lytic murein transglycosylase F (519 aa).

A signal peptide spans 1–32 (MKKLKLNYLLIGVVTLLLAVALWPAIPWSGKA). The non-LT domain stretch occupies residues 33 to 269 (DNRIAAIQAR…RLEEKYLGHG (237 aa)). The tract at residues 270–519 (NDFDYVDTRS…PNTLSPVSPR (250 aa)) is LT domain. E314 is an active-site residue. Positions 495-519 (PFSQAGAGGKTHSALPNTLSPVSPR) are disordered. The span at 508–519 (ALPNTLSPVSPR) shows a compositional bias: polar residues.

This sequence in the N-terminal section; belongs to the bacterial solute-binding protein 3 family. It in the C-terminal section; belongs to the transglycosylase Slt family.

The protein localises to the cell outer membrane. The enzyme catalyses Exolytic cleavage of the (1-&gt;4)-beta-glycosidic linkage between N-acetylmuramic acid (MurNAc) and N-acetylglucosamine (GlcNAc) residues in peptidoglycan, from either the reducing or the non-reducing ends of the peptidoglycan chains, with concomitant formation of a 1,6-anhydrobond in the MurNAc residue.. Murein-degrading enzyme that degrades murein glycan strands and insoluble, high-molecular weight murein sacculi, with the concomitant formation of a 1,6-anhydromuramoyl product. Lytic transglycosylases (LTs) play an integral role in the metabolism of the peptidoglycan (PG) sacculus. Their lytic action creates space within the PG sacculus to allow for its expansion as well as for the insertion of various structures such as secretion systems and flagella. The protein is Membrane-bound lytic murein transglycosylase F of Cronobacter sakazakii (strain ATCC BAA-894) (Enterobacter sakazakii).